A 434-amino-acid chain; its full sequence is Glutamate-1-semialdehyde 2,1-aminomutase (434 aa).

Lys-270 bears the N6-(pyridoxal phosphate)lysine mark.

The protein belongs to the class-III pyridoxal-phosphate-dependent aminotransferase family. HemL subfamily. As to quaternary structure, homodimer. It depends on pyridoxal 5'-phosphate as a cofactor.

It localises to the cytoplasm. It carries out the reaction (S)-4-amino-5-oxopentanoate = 5-aminolevulinate. It participates in porphyrin-containing compound metabolism; protoporphyrin-IX biosynthesis; 5-aminolevulinate from L-glutamyl-tRNA(Glu): step 2/2. The protein is Glutamate-1-semialdehyde 2,1-aminomutase of Pelotomaculum thermopropionicum (strain DSM 13744 / JCM 10971 / SI).